A 131-amino-acid polypeptide reads, in one-letter code: D-ribose pyranase (131 aa).

The Proton donor role is filled by H20. Substrate is bound by residues D28, H98, and 120–122 (YAN).

The protein belongs to the RbsD / FucU family. RbsD subfamily. Homodecamer.

It is found in the cytoplasm. It catalyses the reaction beta-D-ribopyranose = beta-D-ribofuranose. The protein operates within carbohydrate metabolism; D-ribose degradation; D-ribose 5-phosphate from beta-D-ribopyranose: step 1/2. In terms of biological role, catalyzes the interconversion of beta-pyran and beta-furan forms of D-ribose. In Clostridium perfringens (strain 13 / Type A), this protein is D-ribose pyranase.